The sequence spans 763 residues: MAP7 domain-containing protein 2 (763 aa).

Residues M1 to T11 are compositionally biased toward gly residues. Disordered stretches follow at residues M1 to R63, W96 to E124, S149 to K268, and P300 to E540. Residues S52–R63 show a composition bias toward basic and acidic residues. The stretch at E54–K147 forms a coiled coil. Residues E192–S206 show a composition bias toward polar residues. 3 stretches are compositionally biased toward basic and acidic residues: residues M355–G371, A385–A400, and L430–E540.

This sequence belongs to the MAP7 family. As to quaternary structure, interacts (via N-terminus) with microtubules; facilitates microtubule stabilization. Interacts with kinesin-1 family members, KIF5A, KIF5B and KIF5C.

The protein resides in the cytoplasm. It is found in the cytoskeleton. The protein localises to the microtubule organizing center. Its subcellular location is the centrosome. It localises to the midbody. The protein resides in the cell projection. It is found in the neuron projection. The protein localises to the axon. Its function is as follows. Microtubule-stabilizing protein involved in the control of cell motility and neurite outgrowth. Acts as a critical cofactor for kinesin transport; in the proximal axon regulates kinesin-1 family members, KIF5A, KIF5B and KIF5C recruitment to microtubules and contributes to kinesin-1-mediated transport in the axons. This Pongo abelii (Sumatran orangutan) protein is MAP7 domain-containing protein 2 (MAP7D2).